We begin with the raw amino-acid sequence, 156 residues long: Cyanate hydratase (156 aa).

Residues Arg-96, Glu-99, and Ser-122 contribute to the active site.

The protein belongs to the cyanase family.

The catalysed reaction is cyanate + hydrogencarbonate + 3 H(+) = NH4(+) + 2 CO2. Catalyzes the reaction of cyanate with bicarbonate to produce ammonia and carbon dioxide. The chain is Cyanate hydratase from Burkholderia cenocepacia (strain ATCC BAA-245 / DSM 16553 / LMG 16656 / NCTC 13227 / J2315 / CF5610) (Burkholderia cepacia (strain J2315)).